The sequence spans 710 residues: Assimilatory nitrate reductase catalytic subunit (710 aa).

The region spanning 19–77 (EKTYDTQCPFCSMQCKMQLVEQTIVTRKKYTAIGIDNPTTQGRLCIKGMNAHQHALNSS) is the 4Fe-4S Mo/W bis-MGD-type domain. Residues C26, C29, C33, and C63 each coordinate [4Fe-4S] cluster.

Belongs to the prokaryotic molybdopterin-containing oxidoreductase family. [4Fe-4S] cluster is required as a cofactor. The cofactor is Mo-bis(molybdopterin guanine dinucleotide).

Its pathway is nitrogen metabolism; nitrate reduction (denitrification); dinitrogen from nitrate: step 1/4. Its function is as follows. Nitrate reductase is a key enzyme involved in the first step of nitrate assimilation in plants, fungi and bacteria. The sequence is that of Assimilatory nitrate reductase catalytic subunit (nasC) from Bacillus subtilis (strain 168).